The primary structure comprises 145 residues: MPARTKARKRALDVLFEADLRAADPLEILADHTARADTPVPEYAVRLVEGVAAHRAEIDRIIEQFAVGWTLQRMPTVDRNILRLAIYELLWVTEVPDAVVLAEAVKLAQDLSTAESAPFVNGVLAAVRANQATVTASPPPGEPPD.

The protein belongs to the NusB family.

Its function is as follows. Involved in transcription antitermination. Required for transcription of ribosomal RNA (rRNA) genes. Binds specifically to the boxA antiterminator sequence of the ribosomal RNA (rrn) operons. The sequence is that of Transcription antitermination protein NusB from Acidothermus cellulolyticus (strain ATCC 43068 / DSM 8971 / 11B).